The primary structure comprises 158 residues: 6,7-dimethyl-8-ribityllumazine synthase 2 (158 aa).

Residues Trp20, 54-56 (AYE), and 78-80 (FVI) contribute to the 5-amino-6-(D-ribitylamino)uracil site. Arg86 serves as the catalytic Proton donor. 5-amino-6-(D-ribitylamino)uracil is bound at residue Ser111. His125 provides a ligand contact to (2S)-2-hydroxy-3-oxobutyl phosphate.

The protein belongs to the DMRL synthase family. In terms of assembly, homodecamer, arranged as a dimer of pentamers.

The protein localises to the cytoplasm. The catalysed reaction is (2S)-2-hydroxy-3-oxobutyl phosphate + 5-amino-6-(D-ribitylamino)uracil = 6,7-dimethyl-8-(1-D-ribityl)lumazine + phosphate + 2 H2O + H(+). It functions in the pathway cofactor biosynthesis; riboflavin biosynthesis; riboflavin from 2-hydroxy-3-oxobutyl phosphate and 5-amino-6-(D-ribitylamino)uracil: step 1/2. Catalyzes the formation of 6,7-dimethyl-8-ribityllumazine by condensation of 5-amino-6-(D-ribitylamino)uracil with 3,4-dihydroxy-2-butanone 4-phosphate. This is the penultimate step in the biosynthesis of riboflavin. The isozyme RibH2 but not RibH1 is essential for Brucella intracellular survival and replication inside macrophages or in mice. Displays low catalytic activity in comparison with the isozyme RibH1. Is a highly immunogenic protein. Activates dendritic cells (DCs) in vitro, increasing the levels of costimulatory molecules and the secretion of pro-inflammatory cytokines, and recruits DCs, B cells and CD8+ T cells in vivo, both effects in a TLR4-dependent manner. Induces the cross presentation of covalently attached peptides and generates a strong and long-lasting humoral immune response without adjuvants; TLR4 signaling is necessary for the induction of the cytotoxic response but not for antigen cross presentation. Elicits a TLR4-mediated protective response against B16 melanoma in mice, slowing tumor growth and prolonging mice survival. In Brucella abortus (strain 2308), this protein is 6,7-dimethyl-8-ribityllumazine synthase 2.